Reading from the N-terminus, the 196-residue chain is Heat shock protein beta-8 (196 aa).

The segment at 1–28 (MADGQLPFPCSYPSRLRRDPFRDSPLSS) is disordered. Phosphoserine occurs at positions 24 and 57. Thr63 carries the phosphothreonine modification. Residues Arg71 and Arg78 each carry the asymmetric dimethylarginine modification. The 108-residue stretch at 78–185 (RFGVPAEGRS…PFGESSFNNE (108 aa)) folds into the sHSP domain. Ser87 carries the post-translational modification Phosphoserine. The tract at residues 176–196 (PFGESSFNNELPQDNQEVTCS) is disordered. Positions 178–196 (GESSFNNELPQDNQEVTCS) are enriched in polar residues.

The protein belongs to the small heat shock protein (HSP20) family. In terms of assembly, monomer. Forms a ternary complex with BAG3 and HSPA1A. Component of the chaperone-assisted selective autophagy (CASA) complex consisting of BAG3, HSPA8/HSC70, HSPB8 and STUB1/CHIP. Interacts with HSPB1. Interacts with DNAJB6. Interacts with BAG3. As to expression, highly expressed in skeletal muscle, heart, uterus, liver, lung and ovary. Low levels found in stomach and brain. Not detected in small intestine, large intestine, kidney, spleen and testis. In the ovary, expression is concentrated in the endometrium and in the connective tissue between the circular and longitudinal muscles of the myometrium.

Its subcellular location is the cytoplasm. It localises to the nucleus. Its function is as follows. Involved in the chaperone-assisted selective autophagy (CASA), a crucial process for protein quality control, particularly in mechanical strained cells and tissues such as muscle. Displays temperature-dependent chaperone activity. This chain is Heat shock protein beta-8 (Hspb8), found in Mus musculus (Mouse).